Here is a 421-residue protein sequence, read N- to C-terminus: Serine hydroxymethyltransferase (421 aa).

Residues Leu-123 and 127-129 (GHL) each bind (6S)-5,6,7,8-tetrahydrofolate. Lys-232 carries the N6-(pyridoxal phosphate)lysine modification.

Belongs to the SHMT family. As to quaternary structure, homodimer. It depends on pyridoxal 5'-phosphate as a cofactor.

Its subcellular location is the cytoplasm. It carries out the reaction (6R)-5,10-methylene-5,6,7,8-tetrahydrofolate + glycine + H2O = (6S)-5,6,7,8-tetrahydrofolate + L-serine. Its pathway is one-carbon metabolism; tetrahydrofolate interconversion. It functions in the pathway amino-acid biosynthesis; glycine biosynthesis; glycine from L-serine: step 1/1. Its function is as follows. Catalyzes the reversible interconversion of serine and glycine with tetrahydrofolate (THF) serving as the one-carbon carrier. This reaction serves as the major source of one-carbon groups required for the biosynthesis of purines, thymidylate, methionine, and other important biomolecules. Also exhibits THF-independent aldolase activity toward beta-hydroxyamino acids, producing glycine and aldehydes, via a retro-aldol mechanism. The chain is Serine hydroxymethyltransferase from Ehrlichia canis (strain Jake).